The primary structure comprises 325 residues: Quinolinate synthase (325 aa).

Iminosuccinate contacts are provided by H41 and S58. C103 is a [4Fe-4S] cluster binding site. Iminosuccinate is bound by residues 129 to 131 (YIN) and S146. C189 lines the [4Fe-4S] cluster pocket. Residues 215-217 (HPE) and T232 each bind iminosuccinate. Position 282 (C282) interacts with [4Fe-4S] cluster.

Belongs to the quinolinate synthase family. Type 2 subfamily. It depends on [4Fe-4S] cluster as a cofactor.

The protein localises to the cytoplasm. The catalysed reaction is iminosuccinate + dihydroxyacetone phosphate = quinolinate + phosphate + 2 H2O + H(+). It functions in the pathway cofactor biosynthesis; NAD(+) biosynthesis; quinolinate from iminoaspartate: step 1/1. Its function is as follows. Catalyzes the condensation of iminoaspartate with dihydroxyacetone phosphate to form quinolinate. The sequence is that of Quinolinate synthase from Rippkaea orientalis (strain PCC 8801 / RF-1) (Cyanothece sp. (strain PCC 8801)).